The chain runs to 160 residues: Variant surface antigen C (160 aa).

Positions 1-29 (MKKSIFSKKLLVSFGSLVALASIPLIAIS) are cleaved as a signal peptide. The N-palmitoyl cysteine moiety is linked to residue Cys30. The S-diacylglycerol cysteine moiety is linked to residue Cys30. Positions 32 to 160 (QTNTDKSQQP…SSESGSQKTT (129 aa)) are disordered. Low complexity-rich tracts occupy residues 38–54 (SQQPGSGSSTSGDQSGT) and 62–87 (SGTSTSGGQSGTTSGSGTTTGEQTET). Repeat copies occupy residues 86–97 (ETAPKSPESGSQ), 98–109 (EATPKSPESGSQ), 110–121 (EATPKSPESGSQ), 122–133 (EAAPKSSESGSQ), 134–145 (EAAPKSSESGSQ), and 146–157 (EAAPKSSESGSQ). Residues 86 to 157 (ETAPKSPESG…APKSSESGSQ (72 aa)) are 6 X 12 AA tandem repeats. Over residues 93–160 (ESGSQEATPK…SSESGSQKTT (68 aa)) the composition is skewed to polar residues.

The protein resides in the cell membrane. Its function is as follows. Responsible for the antigenic diversity for host adaptation. The polypeptide is Variant surface antigen C (vlpC) (Mesomycoplasma hyorhinis (Mycoplasma hyorhinis)).